Here is a 614-residue protein sequence, read N- to C-terminus: UvrABC system protein C (614 aa).

One can recognise a GIY-YIG domain in the interval 19–97 (SLPGCYLWKN…IKKYNPKFNV (79 aa)). Positions 208–243 (ERLVADLKKAMMDASSKMEYERAGFLKQRIEKINQL) constitute a UVR domain.

The protein belongs to the UvrC family. As to quaternary structure, interacts with UvrB in an incision complex.

The protein resides in the cytoplasm. Its function is as follows. The UvrABC repair system catalyzes the recognition and processing of DNA lesions. UvrC both incises the 5' and 3' sides of the lesion. The N-terminal half is responsible for the 3' incision and the C-terminal half is responsible for the 5' incision. This is UvrABC system protein C from Leptospira biflexa serovar Patoc (strain Patoc 1 / Ames).